The following is a 471-amino-acid chain: V-type ATP synthase beta chain (471 aa).

Belongs to the ATPase alpha/beta chains family.

Functionally, produces ATP from ADP in the presence of a proton gradient across the membrane. The V-type beta chain is a regulatory subunit. This Streptococcus pyogenes serotype M28 (strain MGAS6180) protein is V-type ATP synthase beta chain.